Consider the following 1058-residue polypeptide: Receptor-type guanylate cyclase gcy-22 (1058 aa).

The N-terminal stretch at 1–23 (MSFISKCFICLLFSTYFLPPVNS) is a signal peptide. Topologically, residues 25–470 (VLQVGFLAAN…PKSFTDQYLA (446 aa)) are extracellular. N-linked (GlcNAc...) asparagine glycans are attached at residues Asn-36, Asn-73, Asn-201, Asn-215, Asn-277, Asn-302, Asn-324, Asn-350, and Asn-386. Residues 471 to 491 (IILGCTAAALVLIIAVISTIV) form a helical membrane-spanning segment. Residues 492–1058 (FLVRSKRQEE…IEAKENGESI (567 aa)) are Cytoplasmic-facing. Residues 501–809 (EERLNQLWQV…SSNLMDHVFN (309 aa)) enclose the Protein kinase domain. Residues 811 to 840 (LEQYASNLEDEVQARMKELTEEKKRSDVLL) adopt a coiled-coil conformation. The Guanylate cyclase domain occupies 867–997 (TIFFSDVVSF…DSVNTASRME (131 aa)).

This sequence belongs to the adenylyl cyclase class-4/guanylyl cyclase family. Expression in ASER neuron begins at an early larval stage and is maintained in the adult.

It is found in the cell membrane. It carries out the reaction GTP = 3',5'-cyclic GMP + diphosphate. In terms of biological role, guanylate cyclase involved in the production of the second messenger cGMP. Regulates chemotaxis responses toward Li(1-), Mg(2+), Cl(1-), Br(1)- and I(1-) salt ions and methionine in ASE right (ASER) sensory neuron. May regulate ASER neuronal activity such as axon sprouting and calcium responses to changes in salt concentrations. This Caenorhabditis elegans protein is Receptor-type guanylate cyclase gcy-22.